Reading from the N-terminus, the 633-residue chain is Probable extracellular metalloproteinase 3 (633 aa).

An N-terminal signal peptide occupies residues M1–A18. The propeptide occupies H19–S246. The N-linked (GlcNAc...) asparagine glycan is linked to N410. H429 is a binding site for Zn(2+). Residue E430 is part of the active site. A Zn(2+)-binding site is contributed by H433. N-linked (GlcNAc...) asparagine glycosylation is found at N480 and N622.

This sequence belongs to the peptidase M36 family. Requires Zn(2+) as cofactor.

The protein localises to the secreted. Secreted metalloproteinase probably acting as a virulence factor. This chain is Probable extracellular metalloproteinase 3 (MEP3), found in Trichophyton verrucosum (strain HKI 0517).